We begin with the raw amino-acid sequence, 105 residues long: uncharacterized protein (105 aa).

This is an uncharacterized protein from Haemophilus influenzae (strain ATCC 51907 / DSM 11121 / KW20 / Rd).